We begin with the raw amino-acid sequence, 56 residues long: Ovomucoid (56 aa).

The Kazal-like domain maps to 6–56; it reads VDCSEYPKPDCTLEYRPLCGSDNKTYASKCNFCNAVVESNGTLTLSHFGKC. 3 disulfide bridges follow: Cys-8/Cys-38, Cys-16/Cys-35, and Cys-24/Cys-56. The N-linked (GlcNAc...) asparagine glycan is linked to Asn-45.

The protein resides in the secreted. The protein is Ovomucoid of Callipepla squamata pallida (Blue scaled quail).